Here is a 38-residue protein sequence, read N- to C-terminus: Large ribosomal subunit protein bL36 (38 aa).

Belongs to the bacterial ribosomal protein bL36 family.

In Streptococcus agalactiae serotype III (strain NEM316), this protein is Large ribosomal subunit protein bL36.